The following is an 855-amino-acid chain: Sucrose synthase 5 (855 aa).

The interval 279-758 (SIFNIVIFSI…GLQRICECYT (480 aa)) is GT-B glycosyltransferase.

Belongs to the glycosyltransferase 1 family. Plant sucrose synthase subfamily. As to expression, predominantly expressed in roots, flowers and immature seeds.

The protein localises to the cytoplasm. Its subcellular location is the membrane. The enzyme catalyses an NDP-alpha-D-glucose + D-fructose = a ribonucleoside 5'-diphosphate + sucrose + H(+). Sucrose-cleaving enzyme that provides UDP-glucose and fructose for various metabolic pathways. This is Sucrose synthase 5 (SUS5) from Oryza sativa subsp. japonica (Rice).